A 186-amino-acid chain; its full sequence is Cell division protein SepF (186 aa).

Disordered regions lie at residues 14–59 (EHDE…NETS) and 157–186 (GRSQESNETSSSVSSDNFPTWGYETSRLAQ). Positions 16 to 27 (DEYEEDYDEEME) are enriched in acidic residues. The span at 159-171 (SQESNETSSSVSS) shows a compositional bias: low complexity.

Belongs to the SepF family. Homodimer. Interacts with FtsZ.

The protein localises to the cytoplasm. Cell division protein that is part of the divisome complex and is recruited early to the Z-ring. Probably stimulates Z-ring formation, perhaps through the cross-linking of FtsZ protofilaments. Its function overlaps with FtsA. This chain is Cell division protein SepF, found in Synechocystis sp. (strain ATCC 27184 / PCC 6803 / Kazusa).